The chain runs to 158 residues: Ribosome maturation factor RimP (158 aa).

Belongs to the RimP family.

The protein localises to the cytoplasm. In terms of biological role, required for maturation of 30S ribosomal subunits. This Leuconostoc citreum (strain KM20) protein is Ribosome maturation factor RimP.